The primary structure comprises 376 residues: Methionine import ATP-binding protein MetN 2 (376 aa).

Residues 34-273 form the ABC transporter domain; sequence VRFINLGKTY…PQHDVSKTLL (240 aa). Residue 70–77 participates in ATP binding; that stretch reads GRSGAGKS.

The protein belongs to the ABC transporter superfamily. Methionine importer (TC 3.A.1.24) family. In terms of assembly, the complex is composed of two ATP-binding proteins (MetN), two transmembrane proteins (MetI) and a solute-binding protein (MetQ).

The protein localises to the cell inner membrane. The catalysed reaction is L-methionine(out) + ATP + H2O = L-methionine(in) + ADP + phosphate + H(+). It carries out the reaction D-methionine(out) + ATP + H2O = D-methionine(in) + ADP + phosphate + H(+). Part of the ABC transporter complex MetNIQ involved in methionine import. Responsible for energy coupling to the transport system. The sequence is that of Methionine import ATP-binding protein MetN 2 from Pseudomonas savastanoi pv. phaseolicola (strain 1448A / Race 6) (Pseudomonas syringae pv. phaseolicola (strain 1448A / Race 6)).